A 440-amino-acid chain; its full sequence is Ribosomal protein uS12 methylthiotransferase RimO (440 aa).

The MTTase N-terminal domain maps to 6 to 116 (PKVGFVSLGC…VVTAVHEVVP (111 aa)). Residues C15, C51, C80, C149, C153, and C156 each contribute to the [4Fe-4S] cluster site. The Radical SAM core domain maps to 135–373 (LTPRHYAYLK…MAHQQAISAA (239 aa)). The region spanning 376–440 (QLKVGKEIEV…DEYDLWAELV (65 aa)) is the TRAM domain.

This sequence belongs to the methylthiotransferase family. RimO subfamily. It depends on [4Fe-4S] cluster as a cofactor.

It is found in the cytoplasm. It catalyses the reaction L-aspartate(89)-[ribosomal protein uS12]-hydrogen + (sulfur carrier)-SH + AH2 + 2 S-adenosyl-L-methionine = 3-methylsulfanyl-L-aspartate(89)-[ribosomal protein uS12]-hydrogen + (sulfur carrier)-H + 5'-deoxyadenosine + L-methionine + A + S-adenosyl-L-homocysteine + 2 H(+). Functionally, catalyzes the methylthiolation of an aspartic acid residue of ribosomal protein uS12. The sequence is that of Ribosomal protein uS12 methylthiotransferase RimO from Pseudomonas aeruginosa (strain ATCC 15692 / DSM 22644 / CIP 104116 / JCM 14847 / LMG 12228 / 1C / PRS 101 / PAO1).